Reading from the N-terminus, the 350-residue chain is MKKIRLELVYLRAIICAIIIITHLLTQITLKHENMEGGSLVLQFYIRNIVIFGTPCFIILSQLLTTLNYQKVTYRYLTTRVKYILIPYILMGLFYSYSESLLTDSSFNKQFIENVLLGQWYGYFIVVIMQFFILSYIIFKINYNLFNSKILLLLSFILQQSFLYYFTNNTAFHDTVLHYYPLSENTIIFGWIFYFFLGAYMGYNYERVLNFLERYLVIMIVLAVATYFVFIALANGDYWNVTSFSYSLTPYNSIMFIVILGICTHFKTILFNTIQMISAFSFFIYLLHPIILDSLFAYTNIFEDNTMVFLAISLLFILGLCIGVGMILREFYIFRFIIGKQPYKLNINAY.

The next 10 membrane-spanning stretches (helical) occupy residues Glu7–Thr29, Phe44–Thr66, Thr79–Leu101, Leu116–Ile138, Leu145–Thr167, Ile187–Asn204, Phe211–Leu233, Ser243–Ile262, Ile269–Ile291, and Thr306–Leu328.

The protein belongs to the acyltransferase 3 family.

It is found in the cell membrane. Functionally, presumably involved in the export of the biofilm adhesin polysaccharide poly-beta-1,6-N-acetyl-D-glucosamine (PNAG, also referred to as PIA) across the cell membrane. The sequence is that of Probable poly-beta-1,6-N-acetyl-D-glucosamine export protein (icaC) from Staphylococcus aureus (strain Mu50 / ATCC 700699).